A 608-amino-acid chain; its full sequence is Translation initiation factor RLI1 (608 aa).

2 4Fe-4S ferredoxin-type domains span residues 7–39 (RIAI…KLCI) and 46–75 (KIAF…IINL). ABC transporter domains lie at 70-320 (IQII…FLDG) and 345-568 (LQND…LKNL). 110-117 (GTNGIGKS) serves as a coordination point for ATP. S349 is modified (phosphoserine). 385–392 (GENGTGKT) contributes to the ATP binding site.

The protein belongs to the ABC transporter superfamily. ABCE family. In terms of assembly, component of the multifactor complex (MFC) composed of at least RLI1, the eIF2 subunit SUI2, TIF5/eIF5, and the eIF3 subunits PRT1, HCR1, NIP1, RPG1, TIF34 and TIF35. The complex associates with pre-initiation complexes. Interacts with the complex YAE1:LTO1; the complex bridges the interaction between the CIA complex and RLI1.

The protein localises to the cytoplasm. Its subcellular location is the nucleus. Component of the multifactor complex (MFC) involved in translation initiation. Required for the binding of MFC to the 40S ribosome. Required for the processing and nuclear export of the 60S and 40S ribosomal subunits. In Saccharomyces cerevisiae (strain ATCC 204508 / S288c) (Baker's yeast), this protein is Translation initiation factor RLI1 (RLI1).